Reading from the N-terminus, the 383-residue chain is Dimethylsulfoniopropionate lyase 6 (383 aa).

The protein belongs to the aspartate/glutamate racemases family. ALMA1 subfamily. Homotetramer.

The catalysed reaction is S,S-dimethyl-beta-propiothetin = acrylate + dimethyl sulfide + H(+). Its function is as follows. Mediates cleavage of dimethylsulfoniopropionate (DMSP) into dimethyl sulfide (DMS) and acrylate. DMS is the principal form by which sulfur is transported from oceans to the atmosphere and is a key component of the ocean sulfur cycle. In Emiliania huxleyi (strain CCMP1516), this protein is Dimethylsulfoniopropionate lyase 6.